A 181-amino-acid chain; its full sequence is Probable pyruvoyl-dependent arginine decarboxylase (181 aa).

Ser-43 bears the Pyruvic acid (Ser) mark.

Belongs to the PdaD family. Requires pyruvate as cofactor.

It catalyses the reaction L-arginine + H(+) = agmatine + CO2. The protein is Probable pyruvoyl-dependent arginine decarboxylase of Chlorobium phaeovibrioides (strain DSM 265 / 1930) (Prosthecochloris vibrioformis (strain DSM 265)).